The chain runs to 319 residues: Ribonucleoside-diphosphate reductase small chain (319 aa).

Residues Asp70, Glu101, and His104 each coordinate Fe cation. Tyr108 is an active-site residue. Fe cation-binding residues include Glu163, Glu197, and His200. The interaction with R1 stretch occupies residues 313 to 319 (FSLDVDF).

The protein belongs to the ribonucleoside diphosphate reductase small chain family. Interacts with RNR1/OPG080 subunit. Can interact with host RNR1 supunit. Fe cation serves as cofactor.

It catalyses the reaction a 2'-deoxyribonucleoside 5'-diphosphate + [thioredoxin]-disulfide + H2O = a ribonucleoside 5'-diphosphate + [thioredoxin]-dithiol. Its function is as follows. Ribonucleoside-diphosphate reductase holoenzyme provides the precursors necessary for viral DNA synthesis. Allows virus growth in non-dividing cells. Catalyzes the biosynthesis of deoxyribonucleotides from the corresponding ribonucleotides. This chain is Ribonucleoside-diphosphate reductase small chain (OPG048), found in Homo sapiens (Human).